The chain runs to 564 residues: Pyruvate decarboxylase (564 aa).

Pyruvate contacts are provided by Asp28 and His115. Thiamine diphosphate-binding positions include Thr390 and 413–415; that span reads GSI. Asp444 contacts Mg(2+). Thiamine diphosphate contacts are provided by residues 445–446 and 471–476; these read GS and NNGYTI. Asn471 and Gly473 together coordinate Mg(2+). Glu477 is a binding site for pyruvate.

This sequence belongs to the TPP enzyme family. As to quaternary structure, homotetramer. Requires Mg(2+) as cofactor. Thiamine diphosphate serves as cofactor.

It carries out the reaction a 2-oxocarboxylate + H(+) = an aldehyde + CO2. The enzyme catalyses pyruvate + H(+) = acetaldehyde + CO2. This chain is Pyruvate decarboxylase (PDC), found in Hanseniaspora uvarum (Yeast).